Consider the following 163-residue polypeptide: NADH-quinone oxidoreductase subunit I (163 aa).

4Fe-4S ferredoxin-type domains are found at residues 55–84 (RRYE…IESE) and 94–123 (TQYD…ETRV). [4Fe-4S] cluster contacts are provided by cysteine 64, cysteine 67, cysteine 70, cysteine 74, cysteine 103, cysteine 106, cysteine 109, and cysteine 113.

Belongs to the complex I 23 kDa subunit family. In terms of assembly, NDH-1 is composed of 14 different subunits. Subunits NuoA, H, J, K, L, M, N constitute the membrane sector of the complex. [4Fe-4S] cluster serves as cofactor.

Its subcellular location is the cell inner membrane. It catalyses the reaction a quinone + NADH + 5 H(+)(in) = a quinol + NAD(+) + 4 H(+)(out). Functionally, NDH-1 shuttles electrons from NADH, via FMN and iron-sulfur (Fe-S) centers, to quinones in the respiratory chain. The immediate electron acceptor for the enzyme in this species is believed to be ubiquinone. Couples the redox reaction to proton translocation (for every two electrons transferred, four hydrogen ions are translocated across the cytoplasmic membrane), and thus conserves the redox energy in a proton gradient. The sequence is that of NADH-quinone oxidoreductase subunit I from Hydrogenovibrio crunogenus (strain DSM 25203 / XCL-2) (Thiomicrospira crunogena).